The sequence spans 25 residues: Chrysophsin-2 (25 aa).

A Histidine amide modification is found at histidine 25.

In terms of tissue distribution, gill.

Its subcellular location is the secreted. Functionally, has antibacterial activity against Gram-positive bacteria B.subtilis ATCC 6633, L.garvieae ATCC 49156 and S.iniae F-8502, and Gram-negative bacteria E.coli WT-2, V.anguillarum ATCC 19264, V.penaeicida KHA, V.harveyi ATCC 14126, V.vulnificus ATCC 33148 and A.salmonicida NCMB 1102. Has hemolytic activity against human red blood cells. Seems to disrupt the membranes by adopting an alpha helical conformation. May play a significant role in innate host defense. This is Chrysophsin-2 from Pagrus major (Red sea bream).